Consider the following 448-residue polypeptide: 26S proteasome regulatory subunit 4 homolog (448 aa).

The segment covering 1 to 10 (MGQAQSGNFS) has biased composition (polar residues). A disordered region spans residues 1-58 (MGQAQSGNFSNFGDGANGDNKKDQKKDKPKYEPPVPTRTGRRKKKAQSGPDASAKLPT). Positions 19-31 (DNKKDQKKDKPKY) are enriched in basic and acidic residues. 232-239 (GAPGTGKT) provides a ligand contact to ATP.

It belongs to the AAA ATPase family.

It localises to the cytoplasm. The protein localises to the nucleus. The 26S proteasome is involved in the ATP-dependent degradation of ubiquitinated proteins. The regulatory (or ATPase) complex confers ATP dependency and substrate specificity to the 26S complex. In Schizosaccharomyces pombe (strain 972 / ATCC 24843) (Fission yeast), this protein is 26S proteasome regulatory subunit 4 homolog (mts2).